A 562-amino-acid polypeptide reads, in one-letter code: Putative transport protein ETA_21820 (562 aa).

The next 5 helical transmembrane spans lie at 8–28 (LLIG…LCLG), 32–52 (LGSV…LLGQ), 66–86 (FMLF…SIFF), 94–114 (MLAI…GKLF), and 158–178 (HLSL…IFGA). RCK C-terminal domains lie at 202–288 (LDPD…SFRN) and 290–373 (KEVF…RIGF). A run of 6 helical transmembrane segments spans residues 383–403 (LLAF…TFQF), 406–426 (FNFG…LGFL), 440–460 (ALTM…GLSA), 473–493 (LLML…CFLF), 503–523 (ALLF…EIIS), and 540–560 (AIAN…WPIL).

The protein belongs to the AAE transporter (TC 2.A.81) family. YbjL subfamily.

The protein localises to the cell membrane. The protein is Putative transport protein ETA_21820 of Erwinia tasmaniensis (strain DSM 17950 / CFBP 7177 / CIP 109463 / NCPPB 4357 / Et1/99).